The following is a 340-amino-acid chain: Deubiquitinase SseL (340 aa).

H223 is a catalytic residue. C285 acts as the Nucleophile in catalysis.

Belongs to the peptidase C79 family.

It localises to the secreted. Its subcellular location is the host cytoplasm. In terms of biological role, effector proteins function to alter host cell physiology and promote bacterial survival in host tissues. This protease targets the host cell ubiquitin pathway by acting as a deubiquitinase in infected host cells. This chain is Deubiquitinase SseL (sseL), found in Salmonella paratyphi B (strain ATCC BAA-1250 / SPB7).